Consider the following 224-residue polypeptide: tRNA (guanine-N(7)-)-methyltransferase (224 aa).

Residues Glu-54, Glu-79, Glu-106, and Asp-129 each coordinate S-adenosyl-L-methionine. Residue Asp-129 is part of the active site. 2 residues coordinate substrate: Lys-133 and Asp-165.

Belongs to the class I-like SAM-binding methyltransferase superfamily. TrmB family.

The catalysed reaction is guanosine(46) in tRNA + S-adenosyl-L-methionine = N(7)-methylguanosine(46) in tRNA + S-adenosyl-L-homocysteine. It functions in the pathway tRNA modification; N(7)-methylguanine-tRNA biosynthesis. Functionally, catalyzes the formation of N(7)-methylguanine at position 46 (m7G46) in tRNA. In Chlamydia trachomatis serovar D (strain ATCC VR-885 / DSM 19411 / UW-3/Cx), this protein is tRNA (guanine-N(7)-)-methyltransferase.